The following is a 2910-amino-acid chain: Highly reducing polyketide synthase calA (2910 aa).

The 437-residue stretch at N8 to S444 folds into the Ketosynthase family 3 (KS3) domain. Catalysis depends on for beta-ketoacyl synthase activity residues C181, H320, and H364. Positions V559–T875 are acyl transferase (AT) domain. Residues N948–E1082 are N-terminal hotdog fold. The region spanning N948–K1245 is the PKS/mFAS DH domain. A dehydratase (DH) domain region spans residues Q949–L1242. The active-site Proton acceptor; for dehydratase activity is the H980. The C-terminal hotdog fold stretch occupies residues M1095 to K1245. D1156 acts as the Proton donor; for dehydratase activity in catalysis. The segment at E1399–F1586 is methyltransferase (MT) domain. A ketoreductase (KR)domain region spans residues T2125–I2298. The 83-residue stretch at Q2406–A2488 folds into the Carrier domain. The residue at position 2448 (S2448) is an O-(pantetheine 4'-phosphoryl)serine. Residues L2492–P2565 form a disordered region. Polar residues predominate over residues V2522–D2534. Residues G2550 to P2559 are compositionally biased toward low complexity. Residues L2597–D2826 are reductase (R) domain.

Its pathway is secondary metabolite biosynthesis. Functionally, highly reducing polyketide synthase; part of the gene cluster that mediates the biosynthesis of calbistrin A and related compounds. Calbistrin A is a secondary metabolite with an interesting structure that was recently found to have bioactivity against leukemia cells. It consists of two polyketides linked by an ester bond: a bicyclic decalin containing polyketide and a linear 12 carbon dioic acid structure. The polyketide synthase calA is probably responsible for forming the decalin moiety. Because calA lacks a designated enoylreductase (ER) domain, the required activity is provided by the trans-enoyl reductase calK. Following release from the PKS, calF then probably catalyzes the oxidation and the subsequent Diels Alder cycloisomerization that lead to the formation of the decalin moiety. The decalin polyketide backbone includes two C-methyl groups, at C7 and C11 in backbone, of which the C7 position is probably methylated by the methyltransferase domain of calA. A candidate for adding the methyl group at C11, if not done by CalA, is the cluster methyltransferase calH. Several additional tailoring enzymes within the cluster could be involved in the modification of the decalin polyketide product. Those include the 3 cytochrome P450 monooxygenases CalE, CalG and CalL, of which one might be responsible for the introduction of the extra hydroxyl group attached to the backbone of the decalin moiety, at position C9 in the backbone, that allows for attachment of the linear moiety. One tailoring enzyme activity that is expected to be involved in biosynthesis of calbistrin is an acyltransferase for connecting the two polyketide synthase products, and which could be performed by the cluster acyltransferase calJ. The enzyme responsible for the biosynthesis of the linear moiety, probably a second PKS, has not been identified yet. The chain is Highly reducing polyketide synthase calA from Penicillium decumbens.